Reading from the N-terminus, the 151-residue chain is Large ribosomal subunit protein uL22 (151 aa).

The tract at residues 1–25 (MARINYSVKEDPETTSKAMGSELHI) is disordered.

The protein belongs to the universal ribosomal protein uL22 family. In terms of assembly, part of the 50S ribosomal subunit.

Functionally, this protein binds specifically to 23S rRNA. It makes multiple contacts with different domains of the 23S rRNA in the assembled 50S subunit and ribosome. In terms of biological role, the globular domain of the protein is located near the polypeptide exit tunnel on the outside of the subunit, while an extended beta-hairpin is found that lines the wall of the exit tunnel in the center of the 70S ribosome. The chain is Large ribosomal subunit protein uL22 from Methanosarcina barkeri (strain Fusaro / DSM 804).